Here is a 147-residue protein sequence, read N- to C-terminus: Large ribosomal subunit protein uL13 (147 aa).

The protein belongs to the universal ribosomal protein uL13 family. Part of the 50S ribosomal subunit.

Functionally, this protein is one of the early assembly proteins of the 50S ribosomal subunit, although it is not seen to bind rRNA by itself. It is important during the early stages of 50S assembly. The polypeptide is Large ribosomal subunit protein uL13 (Mycobacterium marinum (strain ATCC BAA-535 / M)).